The primary structure comprises 298 residues: MMRIALYLLTNLAVIVVASITLSLLGVDSYLAQNGSGLNLTSLLIFSAVFGFAGSLISLLISKPMAKWSAKVQTINEPSNQAERWLLDTVKELSDKAGIKMPEVGVFPAQQSNAFATGWNKNDALVAVSQGLLTRFRPEEVRAVLAHEIGHVANGDMVTLSLIQGVVNTFVIFAARVVGYVIDSFMRRDGGGGLGFGYYIVVIVTEIIFGIAASTIVMKFSRFREYRADVAGAQLADRRDMISALQRLKAEAKVPNQMPDSLVAFGINSGVKQGLKALFSSHPPLDDRIAALQEKRHG.

A run of 2 helical transmembrane segments spans residues 4-24 and 41-61; these read IALYLLTNLAVIVVASITLSL and TSLLIFSAVFGFAGSLISLLI. Histidine 147 is a binding site for Zn(2+). Glutamate 148 is a catalytic residue. Histidine 151 lines the Zn(2+) pocket. 2 helical membrane passes run 162–182 and 193–213; these read LIQGVVNTFVIFAARVVGYVI and GLGFGYYIVVIVTEIIFGIAA. Glutamate 225 is a binding site for Zn(2+).

It belongs to the peptidase M48B family. Zn(2+) is required as a cofactor.

Its subcellular location is the cell inner membrane. In Alcanivorax borkumensis (strain ATCC 700651 / DSM 11573 / NCIMB 13689 / SK2), this protein is Protease HtpX.